We begin with the raw amino-acid sequence, 118 residues long: V-type proton ATPase subunit G 1 (118 aa).

Alanine 2 bears the N-acetylalanine mark.

The protein belongs to the V-ATPase G subunit family. V-ATPase is a heteromultimeric enzyme made up of two complexes: the ATP-hydrolytic V1 complex and the proton translocation V0 complex. The V1 complex consists of three catalytic AB heterodimers that form a heterohexamer, three peripheral stalks each consisting of EG heterodimers, one central rotor including subunits D and F, and the regulatory subunits C and H. The proton translocation complex V0 consists of the proton transport subunit a, a ring of proteolipid subunits c9c'', rotary subunit d, subunits e and f, and the accessory subunits ATP6AP1/Ac45 and ATP6AP2/PRR. Kidney; localizes to early distal nephron, encompassing thick ascending limbs and distal convoluted tubules (at protein level). Ubiquitous.

Its subcellular location is the apical cell membrane. Its function is as follows. Subunit of the V1 complex of vacuolar(H+)-ATPase (V-ATPase), a multisubunit enzyme composed of a peripheral complex (V1) that hydrolyzes ATP and a membrane integral complex (V0) that translocates protons. V-ATPase is responsible for acidifying and maintaining the pH of intracellular compartments and in some cell types, is targeted to the plasma membrane, where it is responsible for acidifying the extracellular environment. In aerobic conditions, involved in intracellular iron homeostasis, thus triggering the activity of Fe(2+) prolyl hydroxylase (PHD) enzymes, and leading to HIF1A hydroxylation and subsequent proteasomal degradation. The chain is V-type proton ATPase subunit G 1 (Atp6v1g1) from Mus musculus (Mouse).